The following is a 447-amino-acid chain: MAGYEVNFDGLVGLTHHYAGLSFGNEASTRHQNTLSNPRLAAKQGLLKMKALADLGYKQGVLPPQERPAMGVLRQLGFSGSDEQVLSEVVRKSPRLLSAVSSASSMWTANAATVSPAADSADGRVHFTVANLNNKFHRAIEADTTSAILKSIFNNHRHFVHHDALPSVELFGDEGAANHNRLGGEYDRPAIQVFVYGRQGFEGGAMPSRYPARQTLEASEAVARLHLLDPERAVFVQQNPAVIDQGVFHNDVIAVSNQNVLFHHQHAFVPDIRVMEDLRRKMGRIEQQLFTIEVPAAQVSVAQAVSSYLFNSQLLSKANGKMLLVIPQESQECPAVWEYLSELINSGGPIDEVRVFDLRESMHNGGGPACLRLRVALNDTELAAVNSRVMMTPALFVALNNWVDQHYRDRLQFKDLADPQLLQEGRQALDELTKILNLGSIYPFQHL.

Residues 19–28 (AGLSFGNEAS), Asn-110, and 137–138 (HR) contribute to the substrate site. Glu-174 is an active-site residue. A substrate-binding site is contributed by Arg-213. Residue His-249 is part of the active site. 2 residues coordinate substrate: Asp-251 and Asn-364. Cys-370 functions as the Nucleophile in the catalytic mechanism.

Belongs to the succinylarginine dihydrolase family. As to quaternary structure, homodimer.

The catalysed reaction is N(2)-succinyl-L-arginine + 2 H2O + 2 H(+) = N(2)-succinyl-L-ornithine + 2 NH4(+) + CO2. It functions in the pathway amino-acid degradation; L-arginine degradation via AST pathway; L-glutamate and succinate from L-arginine: step 2/5. Its function is as follows. Catalyzes the hydrolysis of N(2)-succinylarginine into N(2)-succinylornithine, ammonia and CO(2). The protein is N-succinylarginine dihydrolase of Yersinia enterocolitica serotype O:8 / biotype 1B (strain NCTC 13174 / 8081).